The chain runs to 337 residues: Large ribosomal subunit protein uL3 (337 aa).

The disordered stretch occupies residues 1–29; the sequence is MPKINRPRRGSLAFSPRKRAQSPIPKYKS.

The protein belongs to the universal ribosomal protein uL3 family. As to quaternary structure, part of the 50S ribosomal subunit. Forms a cluster with proteins L14 and L24e.

One of the primary rRNA binding proteins, it binds directly near the 3'-end of the 23S rRNA, where it nucleates assembly of the 50S subunit. This Methanoregula boonei (strain DSM 21154 / JCM 14090 / 6A8) protein is Large ribosomal subunit protein uL3.